A 944-amino-acid polypeptide reads, in one-letter code: Valine--tRNA ligase (944 aa).

The 'HIGH' region motif lies at 43 to 53; it reads PNVTGTLHMGH. Residues 550-554 carry the 'KMSKS' region motif; it reads KMSKS. Residue Lys553 coordinates ATP. The stretch at 878-944 forms a coiled coil; the sequence is LVDMDAERTR…TGLREQRAKL (67 aa).

Belongs to the class-I aminoacyl-tRNA synthetase family. ValS type 1 subfamily. Monomer.

The protein localises to the cytoplasm. It catalyses the reaction tRNA(Val) + L-valine + ATP = L-valyl-tRNA(Val) + AMP + diphosphate. Functionally, catalyzes the attachment of valine to tRNA(Val). As ValRS can inadvertently accommodate and process structurally similar amino acids such as threonine, to avoid such errors, it has a 'posttransfer' editing activity that hydrolyzes mischarged Thr-tRNA(Val) in a tRNA-dependent manner. This is Valine--tRNA ligase from Xanthomonas campestris pv. campestris (strain 8004).